The following is a 272-amino-acid chain: ATP phosphoribosyltransferase regulatory subunit (272 aa).

Belongs to the class-II aminoacyl-tRNA synthetase family. HisZ subfamily. As to quaternary structure, heteromultimer composed of HisG and HisZ subunits.

It localises to the cytoplasm. Its pathway is amino-acid biosynthesis; L-histidine biosynthesis; L-histidine from 5-phospho-alpha-D-ribose 1-diphosphate: step 1/9. Functionally, required for the first step of histidine biosynthesis. May allow the feedback regulation of ATP phosphoribosyltransferase activity by histidine. This is ATP phosphoribosyltransferase regulatory subunit from Staphylococcus aureus (strain MRSA252).